A 348-amino-acid chain; its full sequence is Lysophosphatidic acid receptor 2 (348 aa).

Residues 1–30 (MGQCYYNETIGFFYNNSGKELSLHWRPKDV) are Extracellular-facing. N-linked (GlcNAc...) asparagine glycans are attached at residues Asn7 and Asn15. A helical transmembrane segment spans residues 31 to 51 (VVVALGLTVSVLVLLTNLLVI). Residues 52-66 (AAIASNRRFHQPIYY) are Cytoplasmic-facing. A helical membrane pass occupies residues 67-87 (LLGNLAAADLFAGMAYLFLMF). Topologically, residues 88-104 (HTGPRTARLSIKGWFLR) are extracellular. A helical membrane pass occupies residues 105-124 (QGLLDTSLTASVATLLAIAV). At 125–144 (ERHRSVMAVQLHSRLPRGRV) the chain is on the cytoplasmic side. Residues 145 to 165 (VTLIVGVWAAALGLGLLPAHF) traverse the membrane as a helical segment. The Extracellular portion of the chain corresponds to 166–185 (WHCLCDLDSCSRMVPLFSRS). Residues 186 to 206 (YLAAWALSSLLVFLLMVAVYT) form a helical membrane-spanning segment. Residues 207-239 (RIFFYVRRRVERMAEHVSCHPRYRETTLSLVKT) lie on the Cytoplasmic side of the membrane. A helical membrane pass occupies residues 240 to 260 (VVIILGAFVVCWTPGQVVLLL). Residues 261–270 (DGLDCKSCNV) lie on the Extracellular side of the membrane. Residues 271–291 (LAVEKYFLLLAEANSLVNAVV) traverse the membrane as a helical segment. Over 292 to 348 (YSCRDAEMRRTFRRLLCCMCLRWSSHKSARYSASAQTGASTRIMLPENGRPLMDSTL) the chain is Cytoplasmic. Cys308 carries S-palmitoyl cysteine lipidation. The PDZ-binding signature appears at 345 to 348 (DSTL).

The protein belongs to the G-protein coupled receptor 1 family. As to quaternary structure, interacts with SLC9A3R2/NHERF2, MAGI3 and PLCB3. Interacts with RALA and GRK2. As to expression, most abundantly expressed in testes, kidney, and embryonic brain. Other organs also express the transcript, including heart, lung, spleen, thymus, stomach, and adult brain. Several have little or no expression, including liver, small intestine, and skeletal muscle.

It is found in the cell surface. The protein localises to the cell membrane. Receptor for lysophosphatidic acid (LPA), a mediator of diverse cellular activities. Seems to be coupled to the G(i)/G(o), G(12)/G(13), and G(q) families of heteromeric G proteins. Plays a key role in phospholipase C-beta (PLC-beta) signaling pathway Stimulates phospholipase C (PLC) activity in a manner that is independent of RALA activation. This Mus musculus (Mouse) protein is Lysophosphatidic acid receptor 2.